A 442-amino-acid polypeptide reads, in one-letter code: UDP-glycosyltransferase 78D4 (442 aa).

Residues Ala-322–Gln-324, His-339–Glu-347, and Phe-361–His-364 each bind UDP-alpha-D-glucose.

The protein belongs to the UDP-glycosyltransferase family.

This is UDP-glycosyltransferase 78D4 (UGT78D4) from Arabidopsis thaliana (Mouse-ear cress).